Reading from the N-terminus, the 165-residue chain is Protein FAM219A (165 aa).

Methionine 1 is subject to N-acetylmethionine. Residues 1 to 114 (MMEEIDRFQV…SRYSSSGYSS (114 aa)) are disordered. A compositionally biased stretch (basic and acidic residues) spans 32–44 (CDAREEKQRELAR). The span at 49 to 63 (KNGSMGSPVNQQPKK) shows a compositional bias: polar residues. Phosphoserine occurs at positions 55 and 85. Position 96 is a phosphothreonine (threonine 96). A phosphoserine mark is found at serine 98 and serine 105. Positions 105 to 114 (SRYSSSGYSS) are enriched in low complexity.

It belongs to the FAM219 family.

In Macaca fascicularis (Crab-eating macaque), this protein is Protein FAM219A (FAM219A).